The sequence spans 534 residues: MAWCLVFMVFLIYCLISTVGLPVAPADEAAMQLGGVGGGRLSVEPSDVMEASLDFGRLTSAEPLAVFHPRGAGDVAALVKAAYGSASGIRVSARGHGHSISGQAQAAGGVVVDMSHGWRAEAAERTLPVYSPALGGHYIDVWGGELWIDVLNWTLAHGGLAPRSWTDYLYLSVGGTLSNAGISGQAFHHGPQISNVYELDVVTGKGEVVTCSESNNPDLFFGALGGLGQLGIITRARIALEPAPHRVRWIRALYSNFTEFTADQERLISLQHGGRRFDYVEGFVVAAEGLINNWRSSFFSPQNPVKLSSLKHHSGVLYCLEVTKNYDDSTAVTVDQDVEALLGELNFIPGTVFTTDLPYVDFLDRVHKAELKLRGKGMWEVPHPWLNLFVPASRIADFDRGVFRGVLGSRTAGGPILIYPMNRHKWDPRSSVVTPEEDVFYLVAFLRSAVPGSTDPAQSLEALERQNREILEFCDEAGIGAKQYLPNHKAQREWEAHFGARWARFARLKAEFDPRAMLATGQGIFDSPPLLAES.

A signal peptide spans 1–20 (MAWCLVFMVFLIYCLISTVG). Positions 59 to 243 (TSAEPLAVFH…TRARIALEPA (185 aa)) constitute an FAD-binding PCMH-type domain. A93, G95, and G97 together coordinate FAD. H98 is subject to Pros-8alpha-FAD histidine. S99 and Q103 together coordinate FAD. N-linked (GlcNAc...) asparagine glycosylation occurs at N152. FAD-binding residues include D167, S172, S178, I182, and I233. N-linked (GlcNAc...) asparagine glycosylation occurs at N256. Positions 484 and 522 each coordinate FAD.

Belongs to the oxygen-dependent FAD-linked oxidoreductase family. Monomer. The cofactor is FAD. As to expression, expressed in inflorescence meristems.

It localises to the secreted. Its subcellular location is the extracellular space. It carries out the reaction N(6)-dimethylallyladenine + A + H2O = 3-methyl-2-butenal + adenine + AH2. Functionally, catalyzes the oxidation of cytokinins, a family of N(6)-substituted adenine derivatives that are plant hormones, where the substituent is an isopentenyl group. This is Cytokinin dehydrogenase 5 (CKX5) from Oryza sativa subsp. japonica (Rice).